A 290-amino-acid chain; its full sequence is UPF0761 membrane protein Ent638_4092 (290 aa).

The next 6 membrane-spanning stretches (helical) occupy residues 44–64, 104–124, 140–160, 183–203, 210–230, and 244–264; these read LLSLVPLVAVIFALFAAFPMF, VGACGLIVTALLLMYAIDSAL, FAVYWMILTLGPLLAGASLAI, IFPLILSWLAFWLLYSIVPTL, AIVGALVAAILFELGKKGFAL, and VLAVVPILFVWVYWTWCIVLL.

This sequence belongs to the UPF0761 family.

The protein resides in the cell inner membrane. The sequence is that of UPF0761 membrane protein Ent638_4092 from Enterobacter sp. (strain 638).